The primary structure comprises 291 residues: Proteasomal ubiquitin receptor ADRM1 homolog rpn1301 (291 aa).

Residues 1–114 (MSLITFKAGK…ERINSYIKDQ (114 aa)) enclose the Pru domain. Positions 135-162 (TVEQSEPIAQPTESSKESSEIGAPNSDE) are disordered. The region spanning 178 to 290 (AQAGFGGSTV…ARFVSRNNGS (113 aa)) is the DEUBAD domain.

This sequence belongs to the ADRM1 family. In terms of assembly, component of the 19S proteasome regulatory particle complex. The 2 S.pombe rpn13 homologs, rpn1301 and rpn1302 are present at a 0.2-1 ratio.

The protein localises to the cytoplasm. It is found in the nucleus. Functionally, component of the 26S proteasome, a multiprotein complex involved in the ATP-dependent degradation of ubiquitinated proteins. This complex plays a key role in the maintenance of protein homeostasis by removing misfolded or damaged proteins, which could impair cellular functions, and by removing proteins whose functions are no longer required. Therefore, the proteasome participates in numerous cellular processes, including cell cycle progression, apoptosis, or DNA damage repair. Within the complex, functions as a proteasomal ubiquitin receptor. This chain is Proteasomal ubiquitin receptor ADRM1 homolog rpn1301 (rpn1301), found in Schizosaccharomyces pombe (strain 972 / ATCC 24843) (Fission yeast).